The following is a 278-amino-acid chain: Tryptophan synthase alpha chain (278 aa).

Catalysis depends on proton acceptor residues glutamate 49 and aspartate 60.

Belongs to the TrpA family. Tetramer of two alpha and two beta chains.

The enzyme catalyses (1S,2R)-1-C-(indol-3-yl)glycerol 3-phosphate + L-serine = D-glyceraldehyde 3-phosphate + L-tryptophan + H2O. It participates in amino-acid biosynthesis; L-tryptophan biosynthesis; L-tryptophan from chorismate: step 5/5. Functionally, the alpha subunit is responsible for the aldol cleavage of indoleglycerol phosphate to indole and glyceraldehyde 3-phosphate. The chain is Tryptophan synthase alpha chain from Granulibacter bethesdensis (strain ATCC BAA-1260 / CGDNIH1).